A 185-amino-acid polypeptide reads, in one-letter code: Elongation factor P (185 aa).

The protein belongs to the elongation factor P family.

The protein resides in the cytoplasm. It functions in the pathway protein biosynthesis; polypeptide chain elongation. In terms of biological role, involved in peptide bond synthesis. Stimulates efficient translation and peptide-bond synthesis on native or reconstituted 70S ribosomes in vitro. Probably functions indirectly by altering the affinity of the ribosome for aminoacyl-tRNA, thus increasing their reactivity as acceptors for peptidyl transferase. This chain is Elongation factor P, found in Deinococcus deserti (strain DSM 17065 / CIP 109153 / LMG 22923 / VCD115).